We begin with the raw amino-acid sequence, 420 residues long: Mannose-1-phosphate guanylyltransferase regulatory subunit alpha (420 aa).

The interval 2-251 is substrate-binding domain; the sequence is LKAVILIGGP…DGIWSQIKSA (250 aa). The GDP-alpha-D-mannose site is built by glutamate 85 and glutamine 247. Residues 273–420 form a hexapeptide repeat domain region; that stretch reads LAKHTPGGPR…SRSFTNQIIL (148 aa). A C-loop region spans residues 356-384; that stretch reads TPNDPNPNDPRAHMDSESLFKDGKLLPAI.

Belongs to the transferase hexapeptide repeat family. As to quaternary structure, component of the GMPPA-GMPPB mannose-1-phosphate guanylyltransferase complex composed of 4 GMPPA subunits and 8 GMPPB subunits; the complex is organized into three layers, a central layer made up of 2 GMPPA dimers sandwiched between two layers each made up of 2 GMPPB dimers. As to expression, expressed in the liver (at protein level).

The protein resides in the cytoplasm. In terms of biological role, regulatory subunit of the GMPPA-GMPPB mannose-1-phosphate guanylyltransferase complex; reduces the catalytic activity of GMPPB when part of the complex. Mediates allosteric feedback inhibition of GMPPB catalytic activity upon binding GDP-alpha-D-mannose. Together with GMPPB regulates GDP-alpha-D-mannose levels. In Sus scrofa (Pig), this protein is Mannose-1-phosphate guanylyltransferase regulatory subunit alpha (GMPPA).